The chain runs to 223 residues: Ribose-5-phosphate isomerase A (223 aa).

Residues Thr28–Thr31, Asp81–Asp84, and Lys94–Gly97 each bind substrate. Glu103 functions as the Proton acceptor in the catalytic mechanism. Lys121 lines the substrate pocket.

Belongs to the ribose 5-phosphate isomerase family. In terms of assembly, homodimer.

The enzyme catalyses aldehydo-D-ribose 5-phosphate = D-ribulose 5-phosphate. It participates in carbohydrate degradation; pentose phosphate pathway; D-ribose 5-phosphate from D-ribulose 5-phosphate (non-oxidative stage): step 1/1. In terms of biological role, catalyzes the reversible conversion of ribose-5-phosphate to ribulose 5-phosphate. The polypeptide is Ribose-5-phosphate isomerase A (Janthinobacterium sp. (strain Marseille) (Minibacterium massiliensis)).